The primary structure comprises 433 residues: Tol-Pal system protein TolB (433 aa).

The signal sequence occupies residues 1-21; sequence MIKRLRGLLVMLCCVAGMAVA.

This sequence belongs to the TolB family. In terms of assembly, the Tol-Pal system is composed of five core proteins: the inner membrane proteins TolA, TolQ and TolR, the periplasmic protein TolB and the outer membrane protein Pal. They form a network linking the inner and outer membranes and the peptidoglycan layer.

The protein localises to the periplasm. Part of the Tol-Pal system, which plays a role in outer membrane invagination during cell division and is important for maintaining outer membrane integrity. The chain is Tol-Pal system protein TolB from Pseudomonas putida (strain ATCC 47054 / DSM 6125 / CFBP 8728 / NCIMB 11950 / KT2440).